Consider the following 785-residue polypeptide: DNA ligase (785 aa).

Residues 32–36, 81–82, and Glu-121 each bind NAD(+); these read DAEYD and SL. The active-site N6-AMP-lysine intermediate is Lys-123. 4 residues coordinate NAD(+): Arg-144, Glu-181, Lys-297, and Lys-321. Zn(2+) contacts are provided by Cys-415, Cys-418, Cys-445, and Cys-451. Residues 702–785 form the BRCT domain; sequence VEGLPLAGET…AFLKGHGISA (84 aa).

Belongs to the NAD-dependent DNA ligase family. LigA subfamily. Mg(2+) is required as a cofactor. Mn(2+) serves as cofactor.

The enzyme catalyses NAD(+) + (deoxyribonucleotide)n-3'-hydroxyl + 5'-phospho-(deoxyribonucleotide)m = (deoxyribonucleotide)n+m + AMP + beta-nicotinamide D-nucleotide.. Its function is as follows. DNA ligase that catalyzes the formation of phosphodiester linkages between 5'-phosphoryl and 3'-hydroxyl groups in double-stranded DNA using NAD as a coenzyme and as the energy source for the reaction. It is essential for DNA replication and repair of damaged DNA. This is DNA ligase from Pseudomonas fluorescens (strain Pf0-1).